A 307-amino-acid chain; its full sequence is 4-hydroxybenzoate octaprenyltransferase (307 aa).

Transmembrane regions (helical) follow at residues 27–47 (AGWL…AGGF), 50–70 (WHLL…GCCI), 101–121 (LAVG…TNAL), 142–162 (CVAM…PMAF), 179–199 (AAVP…VLAY), 239–259 (LLAW…AAGL), and 285–305 (FRLN…DLGW).

This sequence belongs to the UbiA prenyltransferase family. It depends on Mg(2+) as a cofactor.

It localises to the cell inner membrane. The catalysed reaction is all-trans-octaprenyl diphosphate + 4-hydroxybenzoate = 4-hydroxy-3-(all-trans-octaprenyl)benzoate + diphosphate. It functions in the pathway cofactor biosynthesis; ubiquinone biosynthesis. Functionally, catalyzes the prenylation of para-hydroxybenzoate (PHB) with an all-trans polyprenyl group. Mediates the second step in the final reaction sequence of ubiquinone-8 (UQ-8) biosynthesis, which is the condensation of the polyisoprenoid side chain with PHB, generating the first membrane-bound Q intermediate 3-octaprenyl-4-hydroxybenzoate. The protein is 4-hydroxybenzoate octaprenyltransferase of Methylibium petroleiphilum (strain ATCC BAA-1232 / LMG 22953 / PM1).